We begin with the raw amino-acid sequence, 143 residues long: Glutaredoxin-2 (143 aa).

Residues 1-30 (METNFSFDSNLIVIIIITLFATRIIAKRFL) constitute a mitochondrion transit peptide. Residue Ser37 is modified to Phosphoserine. The Glutaredoxin domain occupies 41–143 (VAHVKDLIGQ…LAEILKPVFQ (103 aa)). Position 58-63 (58-63 (KTYCPY)) interacts with glutathione. S-glutathionyl cysteine; alternate is present on Cys61. Cys61 and Cys64 are oxidised to a cystine. A Phosphoserine modification is found at Ser91. Residues Val109 and 122-123 (NS) each bind glutathione.

The protein belongs to the glutaredoxin family.

It is found in the cytoplasm. Its subcellular location is the mitochondrion. The enzyme catalyses 2 glutathione + H2O2 = glutathione disulfide + 2 H2O. It catalyses the reaction 1-chloro-2,4-dinitrobenzene + glutathione = 2,4-dinitrophenyl-S-glutathione + chloride + H(+). It carries out the reaction RX + glutathione = an S-substituted glutathione + a halide anion + H(+). Its function is as follows. Component of the glutathione system which performs several activities such as glutathione-dependent oxidoreductase, glutathione peroxidase and glutathione S-transferase (GST) activity. The disulfide bond functions as an electron carrier in the glutathione-dependent synthesis of deoxyribonucleotides by the enzyme ribonucleotide reductase. In addition, it is also involved in reducing cytosolic protein- and non-protein-disulfides in a coupled system with glutathione reductase. Required for resistance to reactive oxygen species (ROS) by directly reducing hydroperoxides and for the detoxification of ROS-mediated damage. GRX2 is more active as an oxidoreductase than GRX1. Responsible for the S-glutathionylation of DHBP synthase. In Saccharomyces cerevisiae (strain ATCC 204508 / S288c) (Baker's yeast), this protein is Glutaredoxin-2 (GRX2).